A 500-amino-acid polypeptide reads, in one-letter code: Glycerol kinase (500 aa).

Threonine 12 contributes to the ADP binding site. Residues threonine 12, threonine 13, and serine 14 each contribute to the ATP site. A sn-glycerol 3-phosphate-binding site is contributed by threonine 12. Residue arginine 16 participates in ADP binding. Sn-glycerol 3-phosphate contacts are provided by arginine 82, glutamate 83, tyrosine 135, and aspartate 245. Residues arginine 82, glutamate 83, tyrosine 135, aspartate 245, and glutamine 246 each coordinate glycerol. Threonine 267 and glycine 310 together coordinate ADP. Threonine 267, glycine 310, glutamine 314, and glycine 411 together coordinate ATP. ADP contacts are provided by glycine 411 and asparagine 415.

It belongs to the FGGY kinase family. As to quaternary structure, homotetramer and homodimer (in equilibrium).

The catalysed reaction is glycerol + ATP = sn-glycerol 3-phosphate + ADP + H(+). The protein operates within polyol metabolism; glycerol degradation via glycerol kinase pathway; sn-glycerol 3-phosphate from glycerol: step 1/1. Its activity is regulated as follows. Activated by phosphorylation and inhibited by fructose 1,6-bisphosphate (FBP). Key enzyme in the regulation of glycerol uptake and metabolism. Catalyzes the phosphorylation of glycerol to yield sn-glycerol 3-phosphate. The chain is Glycerol kinase from Clostridium perfringens (strain 13 / Type A).